The sequence spans 5218 residues: MTMPHHSSGPAKDSPLCRFPPFPGGNPVFTNIRREKVNFQLPPPDHALLAAAWAVLLRLYTGHVKTCFESATSDQEANLVTYEARDSDTLQTIVLRGACVSSTAEEKAGLRDLNTAVVRTTVSIDSWTDEMLQDKIAALLQPGKEIVLFQTPSGCVLVYMQSFMSAMEVKNVSSTLTYIMSSDPDKTAIRNLSISPRDLAQIMRWNDRKLKSERTNLVYDLFSARAHEQDANMAIDAWDGRMSYTELERVSSTWARQLQKQGISQGSWVLFCFEKSRLAVVSMIAILKAGGVCVPIDPRYPVERIRDIIRTTNATIALVGAGKTAALFKSADTAVQTIDITKDIPHGLSDTVVQSNTKIDDPAFGLFTSGSTGVPKCIVVTHSQICTAVQAYKDRFGVTSETRVLQFSSYTFDISIADTFTALFYGGTLCIPSEEDRMSNLQDYMVSVRPNWAVLTPTVSRFLDPGVVKDFISTLIFTGEASREADTVPWIEAGVNLYNVYGPAENTLITTATRIRKGKSSNIGYGVNTRTWVTDVSGACLVPVGSIGELLIESGHLADKYLNRPDRTEAAFLSDLPWIPNYEGDSVRRGRRFYRTGDLVRYCDDGSLICVGRSDTQIKLAGQRVELGDVEAHLQSDPTTSQAAVVFPRSGPLEARLIALLVTGNKDGTPHNQQSLPKPAFAQCPPDLVKYATSSLQQRLPSYMVPSVWLGIDFLPMSVSGKLDRAVLQDQLESLSPSDYAEILGTTGLEVDPGGAASSVASDSDLRDMNDDSLLLTACSRVLNLPAGKISYSQSFIHAGGDSITAMQVSSWMKRFTGKRIGVKDLLVSPSISTAASCIKSAQDGSRNFVAVRPGQRIPVSPIQKLFFQTAEASKSWNHYHQSFLFRIDQPIKPQTIEDAISLVMQRHPMLQARFERTEEGDWYQYIPIDVERRASVEVIGSLSTDDREAAMLRARQSIDLTEGPLIRCQLFNNNVDEASRLFFVVIHHAVVDLVSWRIIMEELEAHLATDSTPDRGEAYQESVPFLAWCQVQAEAVKDIPVDRTVPLIPKIPTADFGYWGLKHDENVYGNTVERKIPLGHSITEDLLYKCHDSLHTKTIDVLLAAVLVSFRRSFLDRPVPAVFNEGHGREPGGEDAVDLSRTVGWFTTISPVYVPEVSPGDILDVVRRVKDYRWATPNNGFDYFSTKYLTQSGIKLFEDHLPAEILFNYEGRYQAMESEQTVLKPESWHAGEASKDQDPGLRRFCLFEISTAVLPDGQLHLTCSWNKNMRHQGRIRLWLDTLLPAAIGEIVSSLALASPQLTLSDVELLRLYDYSSLDILKKSILSIPAVQTLDDLEGVYPGSPMQDALFLSQSKSQDGAYEVDFTWRVATSLQNSQPAVDIGCLVEAWKDTVALHAALRTVILESSLPATGILHQVVLRSHDPDIVILDVRDVTAAITILDSYPPPTEEGIALIKRPPHRLLICTTIEGSVLIKFQVNHLVFDGMSTDKIIQDLSKAYTCRHSNKLPDHSESKLHDGTYGNRPTKPPLAEFIRYIRDPQRKQDSINYWKNALRGATTCSFPPLFDQITSEKAMPRQSWASVPIPLCVDSKELSKTLANLGITMSTMFQTVWAIVLRIYSQNGQSVFGYLTSGRDAPVDGIDSAVGNFIAMLVCFFDFDDDGVHTVADMARKIHNASANSISHQACSLAEIQDALGLSTSTPLFNTAFTYLPKRPTNVKAGEPEHHLCFEELSMSDPTEFDLTLFVEPTQESNEVSAHLDFKLSYISQAYATSIASTVAHILSELVHDPYRALNTLPIVSEHDTAIIRSWNDHLFPPATECIHETFSRKVVEHPQREAICSWDGSLTYAELSDLSQRLSIHLVSLGIKVGTKIPICFEKSMWTIVTILAVVQAGGVFVLLEPGHPESRLSGIIKQVQAELLLCSPATSRMGALQNISTQMGTEFKIVELEPEFIRSLPLPPKPNHQPMVGLNDDLYVVFTSGSTGVPKGAVATHQAYATGIYEHAVACGMTSLGAPPRSLQFASYSFDASIGDIFTTLAVGGCLCIPREEDRNPAGITTFINRYGVTWAGITPSLALHLDPDAVPTLKALCVAGEPLSMSVVTVWSKRLNLINMYGPTEATVACIANQVTCTTTTVSDIGRGYRATTWVVQPDNHNSLVPIGAVGELIIEGSILCRGYLNDPERTAEVFIRSPSWLHDLRPNSTLYKTGDLVRYSADGKIIFIGRKDTQVKMNGQRFELGEVEHALQLQLDPSDGPIIVDLLKRTQSGEPDLLIAFLFVGRANTGTGNSDEIFIATSTSSLSEFSTVIKKLQDAQRAMEVLPLFMVPQAYIPIEGGIPLTAAGKIDRRMLRKLCEPFNRNDLISFTSKALSTSVKDAETTDTVEDRLARIWEKVLGVKGVGRESDFFSSGGNSMAAIALRAEAQRSGFTLFVADIFTNPRLADMAKLFSHGQSVSPSSSTLRTKVPISSLQKRSSGLQTAAPVSNGSPVRRCQKENIIDCPVAFEYEEGPSDTQLKEASRICGISSRSIEDVFPCTPMQEALVALSLIPGAQASYALHAAFELRPGLDRNRFRSAWESTVKAQPILRSRIISGSNGSSVVVTSATDSIPQLDVSGLDTFLEQQLQVGFAPGAPLFRLAFVYSKADDCDYFVISAHHAIYDGWSLNLIWSQVLALYTNGELPPPGPSFKHFARNLNLVQSKLDSEDFWRKLLVKPDQESFRFPDVPVGHKPATRCTTNFHFPFSMQSKIGTTANTCINAAWAITLAQYSSNKTVNFGVTLWGRDFPMIDIEHMTGPTIVTVPRQVNVIPESSVAEFLQDLQKSLAVVLPHQHLGLHRIQALGPIARQACDFSTLLVVNHGSSISWSELEAADIVPVPLRSSDLYAYPMVVEVENASSDTLDIRVHSDPDCIEVQLLERLMEQFGHNLQTLCRAASFDPGKRIAELMDDTATTHLRTLFSWNSRVKDSPDVAAIAVHKLLEETAQSQPAESAIVAHDGQLSYMQMDRCADVLARQIRKTNMISAQSPFVCIHLLRSATAVVSMLAVLKAGGAFMPVDISQPRSRLQNLIEESGAKLVLTLPESANALATLSGLTKVIPVSLSELVQQITDNTTKKDEYCKSGDTDPSSPAYLLYTSGTSGKPKGVVMEHRAWSLGFTCHAEYMGFNSCTRILQFSSLMFDLSILEIWAVLYAGGCLFIPSDKERVNNLQDFTRINDINTVFLTPSIGKLLNPKDLPNISFAGFIGEPMTRSLIDAWTLPGRRLVNSYGPTEACVLVTAREISPTAPHDKPSSNIGHALGANIWVVEPQRTALVPIGAVGELCIEAPSLARCYLANPERTEYSFPSTVLDNWQTKKGTRVYRTGDLVRYASDGTLDFLGRKDGQIKLRGQRIELGEIEHHIRRLMSDDPRFHEASVQLYNPATDPDRDATVDVQMREPYLAGLLVLDLVFTDEVMGIPCTSLTSANTSENLQTLVTELKKSLRGVLPHYMVPLHFVAVSRLPTGSSGKLDHAFVRACLRELTAPLDGNFPKVEQVLTTNESVLRQWWGTVLAMDPHSIQRGDDFFSLGGSSISAMRLVGLARSSGHKLQHEDIFMCPRLADMAGQISFVQEASVSPTTSPTIKFDLLDDCEVDEVIDHILPQLDMNKELIEDVYPCTPLQESLMAATARHGEAYTMIQSITVLASQLAQLKKAMDVVFRDFEVLRTRIALGPSQQALQVVVKHEELSWESFPSIQSFKDHFYRSLGYGKPLARLAVITQALDTKQPISHGTREARTKNSQDTVMVVVGAHHSIYDAHVLSMIWRRLYREFIGSQADGILEAETSRSEGVVPFKSYVEKLLRGKDNDESLLFWKEKLRGVSSSQFPPASWPRVLEHQPSATQTLITKVSLPTSSRKKLGATVATVAYAAWALTIAHYTADPDVVFGATLSGRETMAGSISHPESIAGPTIITVPLRIIIDFQTVVSDFLSTLQKDIVRAAYFGQMMGLNSIAHIDNDCRDACGFKSIIVVQVPDEGENHDGRAANPFQMSLESIGHFPAPLVVEVEQSESTDVLIRMAYDPVLVPEKLAHFISDTFTTTMSNLSAANPKAKVESIPALSEAHLAELDVTCPEWILGKAKDEKIRTESHQCLQDLVCRRAQQSPNSQAIDSWDGSISYHELDGLSSILAEHLSQLGVRPEAPVCLLFEKSKWAVVAMIGIIKAGGCFVPLDPSYPHERLEHIISETGSSVIVTSAAYSKLCLSLSVRGIVCDGSVFSSTKKPLPSTADSPPSFSVRPNQAAYILFTSGSTGKPKGVVMEHHSVCSALIALGKRMGLGPQSRVLQFNSYWFDVMLLDIFGTLVYGGCLCIPKEEQRMSNLSGWVQKFKVNTMLLSTSVSRLMQPADTPSLETLCLTGEAVLQSDVDRWAPKLHLIAGYGPTETCIMSVSGELTPSSPANLIGKPVSCQAWVINPLKETELAPYGATGELYIQGPTVARGYLHDDVLTSKAFIVDPQWLTGYKTNENQWSRRAYKTGDLVFWGPQSNLYYVRRKDSSQVKIRGQRVELAEIEEVIRQHIPPDVTVCVDLLSSDDQNTRIILGAVLGIGDRALGGPEDLEVIGYMDDLKSHIIPALEASLPHHMIPEAYVPFVQLPTLGSGKLDRKTVRRVAGPLAFSLPQASARHPNQPTVTHTQKLLRQLWCKILPQLDESAVNKQDNFLGIGGDSIAAIKLVALLRQHGISLAVAEIFTRPTLEAMSSLIDEHNFVVSHAGILSDVTRNTSGVMRQTTNLIAGRHSMAVEKSRECDNSTLPCTEYQQMFLAGTEAFTGAHSAQFIFRLPEKIDLDRLQAAFDHCADWYPNLRTQIHKDADTGRLLHDISPIGVKVPWSCHYSDDLNTVLSHDKKFPPGLDGPLHRVTIMRHRDPTESMLVWTLNHAAYDAWSLRMMLEHITEAYANPDYEPSYSLGWTAFVLHTENTKEASRSFWSSYLSDVKPARLMFNYNLVSNPRQDRLYEARINIPKRVLSQATAATVLLAGLTLLVARVCDTRDVILAHLLTGRTLPLAGIENCPGPTITKVPLRIPLMDQDLVTLELDSVAKKITAELMRVMPHEHSGLSAIREFIPQAEGTTTSSGKFHAGSVLGRLPLDLVIHPKGGLDLLGKHGLGLQNEGFRLVAPPSGGLSMECALVDDDDDKRSDTISVDVSVLWDQRAATQEDVIELVHSLQGIFTKRNLAASICLMYK.

The adenylation 1 stretch occupies residues 223–620; that stretch reads SARAHEQDAN…VGRSDTQIKL (398 aa). Residues 769–843 enclose the Carrier 1 domain; the sequence is MNDDSLLLTA…TAASCIKSAQ (75 aa). Residue S803 is modified to O-(pantetheine 4'-phosphoryl)serine. Positions 858–1154 are condensation 1; that stretch reads IPVSPIQKLF…GWFTTISPVY (297 aa). Positions 1338-1806 are epimerization; sequence EGVYPGSPMQ…LPIVSEHDTA (469 aa). Residues 1828–2233 form an adenylation 2 region; that stretch reads SRKVVEHPQR…IGRKDTQVKM (406 aa). The Carrier 2 domain maps to 2379–2453; sequence ETTDTVEDRL…DMAKLFSHGQ (75 aa). At S2414 the chain carries O-(pantetheine 4'-phosphoryl)serine. Residues 2531–2929 form a condensation 2 region; it reads EDVFPCTPMQ…MEQFGHNLQT (399 aa). Positions 2979–3386 are adenylation 3; that stretch reads LEETAQSQPA…GRKDGQIKLR (408 aa). Residues 3532 to 3608 form the Carrier 3 domain; it reads QVLTTNESVL…DMAGQISFVQ (77 aa). Position 3569 is an O-(pantetheine 4'-phosphoryl)serine (S3569). The segment at 3649-4102 is condensation 3; that stretch reads EDVYPCTPLQ…PALSEAHLAE (454 aa). Positions 4134–4530 are adenylation 4; sequence RRAQQSPNSQ…NLYYVRRKDS (397 aa). The region spanning 4666-4740 is the Carrier 4 domain; the sequence is THTQKLLRQL…AMSSLIDEHN (75 aa). At S4701 the chain carries O-(pantetheine 4'-phosphoryl)serine. Positions 4785 to 5101 are condensation 4; the sequence is TLPCTEYQQM…SAIREFIPQA (317 aa).

It belongs to the NRP synthetase family. Pantetheine 4'-phosphate serves as cofactor.

It functions in the pathway mycotoxin biosynthesis; HC-toxin biosynthesis. Its function is as follows. Non-ribosomal peptide synthetase, part of the diffuse TOX2 gene cluster that mediates the biosynthesis of the HC-toxin, cyclic tetrapeptide of structure cyclo(D-Pro-L-Ala-D-Ala-L-Aeo), where Aeo stands for 2-amino-9,10-epoxi-8-oxodecanoic acid. HC-toxin is a determinant of specificity and virulence in the interaction between the producing fungus and its host, maize. HTS1, contains four modules, one for each amino acid in HC-toxin, with the order of activation being most likely Pro, Ala, Ala, and Aeo. In addition, HTS1 has one epimerase domain between modules 1 and 2, which is responsible for epimerizing L-Pro to D-Pro. The absence of an epimerizing domain after module 3, for producing D-Ala, can be explained by the presence in the cluster of TOXG, an Ala racemase, which produces D-Ala for incorporation by HTS1 into HC-toxin. In Cochliobolus carbonum (Maize leaf spot fungus), this protein is HC-toxin synthetase.